Consider the following 91-residue polypeptide: Sec-independent protein translocase protein TatA (91 aa).

Residues 2–22 (ANLGFPELVLIAVVILVLFGW) form a helical membrane-spanning segment. Positions 43 to 55 (VSEMKNDGAEAEK) are enriched in basic and acidic residues. The tract at residues 43–91 (VSEMKNDGAEAEKTSAASTKTDEITSVSSTDTPQPTVTVESKDEKKHPA) is disordered. Residues 57-81 (SAASTKTDEITSVSSTDTPQPTVTV) show a composition bias toward polar residues. Positions 82–91 (ESKDEKKHPA) are enriched in basic and acidic residues.

Belongs to the TatA/E family. In terms of assembly, the Tat system comprises two distinct complexes: a TatABC complex, containing multiple copies of TatA, TatB and TatC subunits, and a separate TatA complex, containing only TatA subunits. Substrates initially bind to the TatABC complex, which probably triggers association of the separate TatA complex to form the active translocon.

The protein resides in the cell membrane. Functionally, part of the twin-arginine translocation (Tat) system that transports large folded proteins containing a characteristic twin-arginine motif in their signal peptide across membranes. TatA could form the protein-conducting channel of the Tat system. This Corynebacterium kroppenstedtii (strain DSM 44385 / JCM 11950 / CIP 105744 / CCUG 35717) protein is Sec-independent protein translocase protein TatA.